Reading from the N-terminus, the 528-residue chain is Protein MGF 505-7R (528 aa).

2 ANK repeats span residues 54 to 83 (SINDALLLAGEEGDTDVVQLLLLWEGNLHY) and 261 to 291 (NIHRALSYAVSHNRRKILDYLIRQKNIPPNT).

The protein belongs to the asfivirus MGF 505 family. As to quaternary structure, interacts with host STING1. Interacts with host JAK1; this interaction leads to JAK1 degradation. Interacts with host JAK2; this interaction leads to JAK2 degradation. Interacts with host RELA; this interaction inhibits NF-kappa-B promoter activity.

The protein resides in the host cytoplasm. Its function is as follows. Plays a role in virus cell tropism, and may be required for efficient virus replication in macrophages. Interferes with host NF-kappa-B promoter activity mediated by TLR8. Mechanistically, inhibits the phosphorylation and subsequent nuclear translocation of host NF-kappa-B RELA subunit downstream of TLR8. Promotes the expression of the autophagy-related protein host ULK1 to degrade host STING and inhibit the interferon response. Also inhibits JAK1- and JAK2-mediated signaling and thus negatively regulates the IFN-gamma signaling. This African swine fever virus (isolate Tick/Malawi/Lil 20-1/1983) (ASFV) protein is Protein MGF 505-7R.